Here is a 23-residue protein sequence, read N- to C-terminus: Potassium channel toxin alpha-KTx 13.3 (23 aa).

3 disulfides stabilise this stretch: cysteine 2/cysteine 15, cysteine 5/cysteine 20, and cysteine 9/cysteine 22. Residues 13–20 (GKCINGRC) form an interaction with Ca(2+)-activated K(+) channels region. Tyrosine 23 bears the Tyrosine amide mark.

As to expression, expressed by the venom gland.

It is found in the secreted. In terms of biological role, reversibly blocks Shaker B potassium channels, with a dissociation constant of 200 nM. This chain is Potassium channel toxin alpha-KTx 13.3, found in Tityus pachyurus (Colombian scorpion).